We begin with the raw amino-acid sequence, 410 residues long: Serine proteinase inhibitor A3K (410 aa).

The N-terminal stretch at 1–24 (MPSAISRGLLLLAGLCYLVFGIMA) is a signal peptide. Asparagine 62, asparagine 99, asparagine 162, asparagine 229, and asparagine 263 each carry an N-linked (GlcNAc...) asparagine glycan. The RCL stretch occupies residues 360-381 (GTEAAAATVLEATRTARPPRLS).

This sequence belongs to the serpin family.

The protein resides in the secreted. It is found in the extracellular space. Its function is as follows. Contrapsin inhibits trypsin-like proteases. The sequence is that of Serine proteinase inhibitor A3K (SERPINA3K) from Cavia porcellus (Guinea pig).